Reading from the N-terminus, the 358-residue chain is DNA integrity scanning protein DisA (358 aa).

The DAC domain occupies 6-144; it reads RPTLREAVAR…RGERHVLTDS (139 aa). ATP is bound by residues Gly-73, Leu-91, and 104-108; that span reads TRHRS.

This sequence belongs to the DisA family. In terms of assembly, homooctamer. Mg(2+) is required as a cofactor.

The enzyme catalyses 2 ATP = 3',3'-c-di-AMP + 2 diphosphate. Its function is as follows. Participates in a DNA-damage check-point. DisA forms globular foci that rapidly scan along the chromosomes searching for lesions. Functionally, also has diadenylate cyclase activity, catalyzing the condensation of 2 ATP molecules into cyclic di-AMP (c-di-AMP). c-di-AMP likely acts as a signaling molecule that may couple DNA integrity with a cellular process. The chain is DNA integrity scanning protein DisA from Mycobacterium tuberculosis (strain ATCC 25177 / H37Ra).